Reading from the N-terminus, the 118-residue chain is Small ribosomal subunit protein bS6 (118 aa).

It belongs to the bacterial ribosomal protein bS6 family.

Functionally, binds together with bS18 to 16S ribosomal RNA. The protein is Small ribosomal subunit protein bS6 of Orientia tsutsugamushi (strain Ikeda) (Rickettsia tsutsugamushi).